A 351-amino-acid polypeptide reads, in one-letter code: Probable inactive tRNA-specific adenosine deaminase-like protein 3 (351 aa).

At Met-1 the chain carries N-acetylmethionine. Positions 1–26 (MEPAPGLVEQPKCLEAGSPEPEPAPW) are disordered. The region spanning 171 to 336 (AAMQSHMERA…PDLNHRFQVF (166 aa)) is the CMP/dCMP-type deaminase domain. Zn(2+) contacts are provided by His-223, Cys-291, and Cys-294.

This sequence belongs to the cytidine and deoxycytidylate deaminase family. ADAT3 subfamily. Zn(2+) is required as a cofactor.

The protein is Probable inactive tRNA-specific adenosine deaminase-like protein 3 (ADAT3) of Homo sapiens (Human).